Reading from the N-terminus, the 185-residue chain is Ribosome-recycling factor (185 aa).

This sequence belongs to the RRF family.

The protein localises to the cytoplasm. In terms of biological role, responsible for the release of ribosomes from messenger RNA at the termination of protein biosynthesis. May increase the efficiency of translation by recycling ribosomes from one round of translation to another. This is Ribosome-recycling factor from Corynebacterium glutamicum (strain ATCC 13032 / DSM 20300 / JCM 1318 / BCRC 11384 / CCUG 27702 / LMG 3730 / NBRC 12168 / NCIMB 10025 / NRRL B-2784 / 534).